The sequence spans 446 residues: Fatty acid desaturase 2 (446 aa).

Topologically, residues 1–132 (MGMGGQSGEG…EDMRLFKSNP (132 aa)) are cytoplasmic. Residues 20–97 (EAQYSWEEIQ…LKPLYIGELA (78 aa)) form the Cytochrome b5 heme-binding domain. The helical transmembrane segment at 133 to 153 (AFFIFYLFHILLIEFLAWCTL) threads the bilayer. Residue His154 is a topological domain, lumenal. The chain crosses the membrane as a helical span at residues 155–175 (YLGTGWIPAIITVLLLTISQA). Residues 176–265 (QAGWLQHDFG…IKYLPYNHQH (90 aa)) are Cytoplasmic-facing. Positions 182–186 (HDFGH) match the Histidine box-1 motif. The short motif at 219–223 (HFQHH) is the Histidine box-2 element. The helical transmembrane segment at 266 to 286 (LYFFLIGPPLLIPVYFTVQII) threads the bilayer. Residues 287 to 307 (KTMIARKDWVDLAWSVSYYVR) are Lumenal-facing. The helical transmembrane segment at 308–328 (FFFTFVPFFGVLGSLALLNAV) threads the bilayer. At 329 to 446 (RFFESHWFVW…QLWLDAYLHK (118 aa)) the chain is on the cytoplasmic side. The Histidine box-3 signature appears at 384-388 (QIEHH).

This sequence belongs to the fatty acid desaturase type 1 family.

Its subcellular location is the endoplasmic reticulum membrane. It functions in the pathway lipid metabolism; polyunsaturated fatty acid biosynthesis. In terms of biological role, component of a lipid metabolic pathway that catalyzes biosynthesis of highly unsaturated fatty acids (HUFA) from precursor essential polyunsaturated fatty acids (PUFA) linoleic acid (LA) (18:2n-6) and alpha-linolenic acid (ALA) (18:3n-3). Catalyzes the first and rate limiting step in this pathway which is the desaturation of LA (18:2n-6) and ALA (18:3n-3) into gamma-linoleic acid (GLA) (18:3n-6) and stearidonic acid (18:4n-3) respectively and other desaturation steps. Highly unsaturated fatty acids (HUFA) play pivotal roles in many biological functions. The polypeptide is Fatty acid desaturase 2 (fads2) (Xenopus laevis (African clawed frog)).